The chain runs to 126 residues: Large ribosomal subunit protein bL12 (126 aa).

It belongs to the bacterial ribosomal protein bL12 family. Homodimer. Part of the ribosomal stalk of the 50S ribosomal subunit. Forms a multimeric L10(L12)X complex, where L10 forms an elongated spine to which 2 to 4 L12 dimers bind in a sequential fashion. Binds GTP-bound translation factors.

Forms part of the ribosomal stalk which helps the ribosome interact with GTP-bound translation factors. Is thus essential for accurate translation. In Chlorobaculum tepidum (strain ATCC 49652 / DSM 12025 / NBRC 103806 / TLS) (Chlorobium tepidum), this protein is Large ribosomal subunit protein bL12.